A 144-amino-acid chain; its full sequence is MRNTARWAATLGLTATAVCGPLAGASLASPATAPASLYAPSALVLTVGHGESAATAAPLRAVTLTCAPTASGTHPAAAAACAELRAAHGDPSALAAEDSVMCTREYAPVVVTVDGVWQGRRLSYERTFANECVKNAGSASVFTF.

The signal sequence occupies residues 1-35 (MRNTARWAATLGLTATAVCGPLAGASLASPATAPA). Intrachain disulfides connect Cys-66–Cys-81 and Cys-102–Cys-132.

This sequence belongs to the protease inhibitor I16 (SSI) family. In terms of assembly, homodimer.

It is found in the secreted. Its function is as follows. Strong inhibitory activity toward subtilisin BPN' and, to a lesser extent, toward trypsin. This is Subtilase-type protease inhibitor (sti1) from Streptomyces coelicolor (strain ATCC BAA-471 / A3(2) / M145).